The primary structure comprises 134 residues: Small ribosomal subunit protein uS8c (134 aa).

This sequence belongs to the universal ribosomal protein uS8 family. As to quaternary structure, part of the 30S ribosomal subunit.

The protein resides in the plastid. It is found in the chloroplast. Functionally, one of the primary rRNA binding proteins, it binds directly to 16S rRNA central domain where it helps coordinate assembly of the platform of the 30S subunit. In Gossypium hirsutum (Upland cotton), this protein is Small ribosomal subunit protein uS8c (rps8).